Here is a 391-residue protein sequence, read N- to C-terminus: Putative neutrophil cytosol factor 1B (391 aa).

In terms of domain architecture, PX spans 1-126; the sequence is MGDTFIRHIA…DFFKVRPDDL (126 aa). SH3 domains follow at residues 157–216 and 227–286; these read IILQ…PLDS and YAGE…KSGQ. The tract at residues 286–391 is disordered; that stretch reads QDVSQAQRQI…STKRKLASAV (106 aa). 2 positions are modified to phosphoserine: Ser-304 and Ser-305. Residues 310 to 319 are compositionally biased toward basic residues; the sequence is HSIHQRSRKR. Ser-321, Ser-329, Ser-346, and Ser-349 each carry phosphoserine.

The protein resides in the cytoplasm. Functionally, may be required for activation of the latent NADPH oxidase (necessary for superoxide production). The protein is Putative neutrophil cytosol factor 1B (NCF1B) of Homo sapiens (Human).